We begin with the raw amino-acid sequence, 728 residues long: 1,4-alpha-glucan branching enzyme GlgB (728 aa).

D405 functions as the Nucleophile in the catalytic mechanism. Residue E458 is the Proton donor of the active site.

This sequence belongs to the glycosyl hydrolase 13 family. GlgB subfamily. Monomer.

The catalysed reaction is Transfers a segment of a (1-&gt;4)-alpha-D-glucan chain to a primary hydroxy group in a similar glucan chain.. The protein operates within glycan biosynthesis; glycogen biosynthesis. Catalyzes the formation of the alpha-1,6-glucosidic linkages in glycogen by scission of a 1,4-alpha-linked oligosaccharide from growing alpha-1,4-glucan chains and the subsequent attachment of the oligosaccharide to the alpha-1,6 position. In Shigella flexneri serotype 5b (strain 8401), this protein is 1,4-alpha-glucan branching enzyme GlgB.